Here is an 886-residue protein sequence, read N- to C-terminus: Inter-alpha-trypsin inhibitor heavy chain H3 (886 aa).

Positions 1 to 18 (MWWPYLVLALLSGLEASG) are cleaved as a signal peptide. Positions 19-30 (FPRSPLRLLGKR) are excised as a propeptide. The region spanning 26–155 (LLGKRSLPEG…KVTFELTYEE (130 aa)) is the VIT domain. Residue asparagine 88 is glycosylated (N-linked (GlcNAc...) asparagine). The VWFA domain occupies 279–439 (PKNIVFVIDI…YNFLETMALE (161 aa)). The N-linked (GlcNAc...) asparagine glycan is linked to asparagine 577. Aspartate 1-(chondroitin 4-sulfate)-ester is present on aspartate 646. A propeptide spanning residues 647-886 (PHFIIQVPGK…HTDYIVPSLF (240 aa)) is cleaved from the precursor.

Belongs to the ITIH family. I-alpha-I plasma protease inhibitors are assembled from one or two heavy chains (HC) and one light chain, bikunin. Pre-alpha-inhibitor (P-alpha-I) is composed of ITIH3/HC3 and bikunin. Heavy chains are linked to bikunin via chondroitin 4-sulfate esterified to the alpha-carboxyl of the C-terminal aspartate after propeptide cleavage.

It localises to the secreted. In terms of biological role, may act as a carrier of hyaluronan in serum or as a binding protein between hyaluronan and other matrix protein, including those on cell surfaces in tissues to regulate the localization, synthesis and degradation of hyaluronan which are essential to cells undergoing biological processes. This chain is Inter-alpha-trypsin inhibitor heavy chain H3 (ITIH3), found in Mesocricetus auratus (Golden hamster).